The chain runs to 286 residues: 3-hydroxybutyryl-CoA dehydrogenase (286 aa).

Belongs to the 3-hydroxyacyl-CoA dehydrogenase family.

The enzyme catalyses 3-hydroxybutanoyl-CoA + NAD(+) = acetoacetyl-CoA + NADH + H(+). It carries out the reaction (3S)-3-hydroxybutanoyl-CoA + NADP(+) = acetoacetyl-CoA + NADPH + H(+). It participates in lipid metabolism; butanoate metabolism. In Mycobacterium tuberculosis (strain CDC 1551 / Oshkosh), this protein is 3-hydroxybutyryl-CoA dehydrogenase (fadB2).